Reading from the N-terminus, the 116-residue chain is Large ribosomal subunit protein bL17 (116 aa).

Belongs to the bacterial ribosomal protein bL17 family. In terms of assembly, part of the 50S ribosomal subunit. Contacts protein L32.

The chain is Large ribosomal subunit protein bL17 from Trichodesmium erythraeum (strain IMS101).